The following is a 222-amino-acid chain: RING finger protein 141 (222 aa).

The segment at Cys147–Arg184 adopts an RING-type zinc-finger fold.

In Danio rerio (Zebrafish), this protein is RING finger protein 141 (rnf141).